Consider the following 242-residue polypeptide: MKRSKTLRAADAKVDREKLYAPLEAVRLAKETSATKFDSTVEVAFRLGVDPRKADQMVRGTVNLPHGTGKTARVLVFATGDRAAAAEAAGADIVGDDELINEIAKGNRLNEFDAVVATPDLMGKVGRLGRVLGPRGLMPNPKTGTVTMDVAKAVTEIKGGKIEFRVDKHSNLHFIIGKVSFSDEKLVENYAAALDEIIRLKPSAAKGRYIKKAALSTTMGPGIQLDSNRTRNLLVEEDPAAV.

The protein belongs to the universal ribosomal protein uL1 family. Part of the 50S ribosomal subunit.

Its function is as follows. Binds directly to 23S rRNA. The L1 stalk is quite mobile in the ribosome, and is involved in E site tRNA release. Functionally, protein L1 is also a translational repressor protein, it controls the translation of the L11 operon by binding to its mRNA. This chain is Large ribosomal subunit protein uL1, found in Kitasatospora aureofaciens (Streptomyces aureofaciens).